A 172-amino-acid polypeptide reads, in one-letter code: Type VI secretion system sheath protein TssB1 (172 aa).

As to quaternary structure, forms a heterodimer with TssC1. Heterodimers assemble to form the sheath of the T6SS machinery. Interacts with TagJ. Interacts with TssA1.

Functionally, core component of the H1 type VI (H1-T6SS) secretion system that plays a role in the release of toxins targeting both eukaryotic and prokaryotic species. Forms the sheath of the structure by assembling into tubules together with TssC1 resulting in the stacking of cogwheel-like structures showing predominantly a 12-fold symmetry. The sheath contracts to provide the energy needed for effector delivery. The polypeptide is Type VI secretion system sheath protein TssB1 (Pseudomonas aeruginosa (strain ATCC 15692 / DSM 22644 / CIP 104116 / JCM 14847 / LMG 12228 / 1C / PRS 101 / PAO1)).